Consider the following 324-residue polypeptide: Probable pectinesterase A (324 aa).

Positions 1-19 are cleaved as a signal peptide; the sequence is MHGSLLKLALLSFSLGSSA. Gln-142 lines the substrate pocket. Asp-165 (proton donor) is an active-site residue. The active-site Nucleophile is the Asp-186. Substrate contacts are provided by Arg-246 and Trp-248. Asn-285 is a glycosylation site (N-linked (GlcNAc...) asparagine).

This sequence belongs to the pectinesterase family.

The protein resides in the secreted. The catalysed reaction is [(1-&gt;4)-alpha-D-galacturonosyl methyl ester](n) + n H2O = [(1-&gt;4)-alpha-D-galacturonosyl](n) + n methanol + n H(+). Its pathway is glycan metabolism; pectin degradation; 2-dehydro-3-deoxy-D-gluconate from pectin: step 1/5. Functionally, involved in maceration and soft-rotting of plant tissue. The chain is Probable pectinesterase A (pmeA) from Aspergillus oryzae (strain ATCC 42149 / RIB 40) (Yellow koji mold).